Consider the following 746-residue polypeptide: Iron-sulfur clusters transporter ABCB7, mitochondrial (746 aa).

The N-terminal 19 residues, 1 to 19, are a transit peptide targeting the mitochondrion; the sequence is MAPMLVSLNCGIRVQRRTL. Residues 20–133 lie on the Mitochondrial matrix side of the membrane; it reads TLLIRQTSSY…KDRPDLRARV (114 aa). The ABC transmembrane type-1 domain occupies 133 to 429; the sequence is VAVSLGLLAG…LGTVYRETRQ (297 aa). Residues 134–154 form a helical membrane-spanning segment; that stretch reads AVSLGLLAGAKLTNVMVPFMF. At 155–176 the chain is on the mitochondrial intermembrane side; that stretch reads KYAVDELNQMSGHMLNLNDAPS. Residues 177-199 form a helical membrane-spanning segment; sequence TVATMTTAVLIGYGVSRAGSALF. Residues 200-252 are Mitochondrial matrix-facing; sequence NELRNTVFGKVAQSSIRRIAKNVFLHLHNLDLGFHLSRQTGALSKAIDRGTRG. Residues 253 to 273 form a helical membrane-spanning segment; sequence ISFVLSALVFNLGPTVFEMFL. Topologically, residues 274-283 are mitochondrial intermembrane; sequence VSAILYYKCG. Residues 284 to 304 traverse the membrane as a helical segment; the sequence is GEFAAVALGTLSAYTIFTILV. Residues 305-375 are Mitochondrial matrix-facing; that stretch reads TQWRTRFRIE…TLAMLNFGQS (71 aa). Glutathione-binding positions include 308 to 312 and 371 to 374; these read RTRFR and NFGQ. Residues 376-396 traverse the membrane as a helical segment; sequence AIFSVGLTAIMLLASKGIAAG. The Mitochondrial intermembrane portion of the chain corresponds to 397 to 402; sequence NMTVGD. Residues 403–423 traverse the membrane as a helical segment; the sequence is LVMVNGLLFQLSLPLNFLGTV. Residue Gly-421 participates in glutathione binding. Over 424–746 the chain is Mitochondrial matrix; the sequence is YRETRQALID…SVKGCGNCSC (323 aa). An ABC transporter domain is found at 465-699; it reads IRFEDVYFEY…PGSLYAELWN (235 aa). Residues Tyr-474 and 498-505 each bind ATP; that span reads GGSGSGKS. Positions 708–728 are disordered; it reads SRKSSSAPAAERLSQKEEERK.

It belongs to the ABC transporter superfamily. ABCB family. Heavy Metal importer (TC 3.A.1.210) subfamily. Homodimer.

Its subcellular location is the mitochondrion inner membrane. The protein resides in the mitochondrion. It catalyses the reaction (glutathione)4[2Fe(III)-2S] cluster(in) + ATP + H2O = (glutathione)4[2Fe(III)-2S] cluster(out) + ADP + phosphate + H(+). Functionally, exports glutathione-coordinated iron-sulfur clusters such as [2Fe-2S]-(GS)4 cluster from the mitochondria to the cytosol in an ATP-dependent manner allowing the assembly of the cytosolic iron-sulfur (Fe/S) cluster-containing proteins and participates in iron homeostasis. May play a role in iron and lipid metabolism. The chain is Iron-sulfur clusters transporter ABCB7, mitochondrial from Oryzias latipes (Japanese rice fish).